Consider the following 102-residue polypeptide: Small ribosomal subunit protein eS24 (102 aa).

This sequence belongs to the eukaryotic ribosomal protein eS24 family.

The sequence is that of Small ribosomal subunit protein eS24 from Methanococcus maripaludis (strain DSM 14266 / JCM 13030 / NBRC 101832 / S2 / LL).